Reading from the N-terminus, the 206-residue chain is Methylthioribulose-1-phosphate dehydratase (206 aa).

Zn(2+) contacts are provided by histidine 96 and histidine 98.

Belongs to the aldolase class II family. MtnB subfamily. Zn(2+) is required as a cofactor.

The enzyme catalyses 5-(methylsulfanyl)-D-ribulose 1-phosphate = 5-methylsulfanyl-2,3-dioxopentyl phosphate + H2O. It functions in the pathway amino-acid biosynthesis; L-methionine biosynthesis via salvage pathway; L-methionine from S-methyl-5-thio-alpha-D-ribose 1-phosphate: step 2/6. In terms of biological role, catalyzes the dehydration of methylthioribulose-1-phosphate (MTRu-1-P) into 2,3-diketo-5-methylthiopentyl-1-phosphate (DK-MTP-1-P). The polypeptide is Methylthioribulose-1-phosphate dehydratase (Azotobacter vinelandii (strain DJ / ATCC BAA-1303)).